Reading from the N-terminus, the 304-residue chain is UDP-N-acetylenolpyruvoylglucosamine reductase (304 aa).

Positions 31 to 196 (KVGGPADYLA…ISAKFNLKPG (166 aa)) constitute an FAD-binding PCMH-type domain. Arg175 is a catalytic residue. Ser225 functions as the Proton donor in the catalytic mechanism. The active site involves Glu295.

The protein belongs to the MurB family. Requires FAD as cofactor.

It localises to the cytoplasm. It catalyses the reaction UDP-N-acetyl-alpha-D-muramate + NADP(+) = UDP-N-acetyl-3-O-(1-carboxyvinyl)-alpha-D-glucosamine + NADPH + H(+). It functions in the pathway cell wall biogenesis; peptidoglycan biosynthesis. Its function is as follows. Cell wall formation. The sequence is that of UDP-N-acetylenolpyruvoylglucosamine reductase from Streptococcus thermophilus (strain ATCC BAA-491 / LMD-9).